Reading from the N-terminus, the 1115-residue chain is Neural cell adhesion molecule 1 (1115 aa).

Positions 1 to 19 (MLRTKDLIWTLFFLGTAVS) are cleaved as a signal peptide. Ig-like C2-type domains are found at residues 20–111 (LQVD…ATVN), 116–205 (QKLM…KDIQ), 212–302 (PTVQ…ASIH), 309–402 (PKIT…MYLE), and 407–492 (PKLQ…ESLE). At 20-711 (LQVDIVPSQG…NGSPTAGLST (692 aa)) the chain is on the extracellular side. Cystine bridges form between Cys-41/Cys-96 and Cys-139/Cys-189. Heparin contacts are provided by residues 152-156 (KHKGR) and 161-165 (KKDVR). Asn-222 is a glycosylation site (N-linked (GlcNAc...) asparagine; partial). Cys-235 and Cys-288 form a disulfide bridge. 5 N-linked (GlcNAc...) asparagine glycosylation sites follow: Asn-316, Asn-348, Asn-424, Asn-450, and Asn-479. Cys-330 and Cys-386 are disulfide-bonded. The cysteines at positions 427 and 480 are disulfide-linked. 2 consecutive Fibronectin type-III domains span residues 500–599 (TPSS…TQPV) and 601–696 (EPSA…SAQP). Thr-706 is lipidated: GPI-anchor amidated serine. Residues 712–729 (GAIVGILIVIFVLLLVVM) traverse the membrane as a helical segment. At 730-1115 (DITCYFLNKC…TQTKENESKA (386 aa)) the chain is on the cytoplasmic side. Disordered stretches follow at residues 756–809 (GAKG…TEPE), 839–912 (FATA…SASN), and 924–1115 (VLSP…ESKA). A compositionally biased stretch (basic and acidic residues) spans 758-799 (KGKDMEEGKAAFSKDESKEPIVEVRTEEERTPNHDGGKHTEP). Ser-770 and Ser-774 each carry phosphoserine. Low complexity-rich tracts occupy residues 800–809 (NETTPLTEPE), 845–856 (SPTSETTTLTSS), and 876–896 (TPSKGVTASSSSPASAPKVAP). Residues Ser-887 and Ser-890 each carry the phosphoserine modification. Polar residues-rich tracts occupy residues 902-912 (DTPTSAPSASN) and 926-935 (SPSTPASAGE). The residue at position 926 (Ser-926) is a Phosphoserine. The residue at position 929 (Thr-929) is a Phosphothreonine. 2 stretches are compositionally biased toward low complexity: residues 936–974 (TSKAPPASKASPAPTPTPAGAASPLAAVAAPATDAPQAK) and 999–1012 (AATAPASPKSKAAT). Ser-946 and Ser-958 each carry phosphoserine. Position 1001 is a phosphothreonine (Thr-1001). At Ser-1005 the chain carries Phosphoserine. Basic and acidic residues-rich tracts occupy residues 1019-1037 (EDLKMDEGNFKTPDIDLAK) and 1074-1091 (KTEKGPVETKSEPPESEA). Thr-1030 is modified (phosphothreonine).

As to quaternary structure, interacts with MDK. Found in a complex with SLC39A6, SLC39A10 and with NCAM1; this complex controls NCAM1 phosphorylation and integration into focal adhesion complexes during epithelial-tomesenchymal transition. Interacts with synaptic plasticity regulator PANTS. Polysialylated by ST8SIA2 and ST8SIA4. Polysialylation modulates cell interactions by confering both attractive and repulsive properties that are highly regulated by ST8SIA2 and ST8SIA4. Polysialylation is formed on a-2,3-linked sialic acid of core glycans.

The protein localises to the cell membrane. In terms of biological role, this protein is a cell adhesion molecule involved in neuron-neuron adhesion, neurite fasciculation, outgrowth of neurites, etc. The protein is Neural cell adhesion molecule 1 of Mus musculus (Mouse).